The sequence spans 104 residues: Large ribosomal subunit protein uL23 (104 aa).

This sequence belongs to the universal ribosomal protein uL23 family. In terms of assembly, part of the 50S ribosomal subunit. Contacts protein L29, and trigger factor when it is bound to the ribosome.

One of the early assembly proteins it binds 23S rRNA. One of the proteins that surrounds the polypeptide exit tunnel on the outside of the ribosome. Forms the main docking site for trigger factor binding to the ribosome. This chain is Large ribosomal subunit protein uL23, found in Nostoc punctiforme (strain ATCC 29133 / PCC 73102).